The sequence spans 70 residues: Small ribosomal subunit protein bS21 (70 aa).

Positions 43-70 (TERKRKAAAAVKRQHKRLRSLTLPPKLY) are disordered. Residues 45-61 (RKRKAAAAVKRQHKRLR) show a composition bias toward basic residues.

The protein belongs to the bacterial ribosomal protein bS21 family.

The sequence is that of Small ribosomal subunit protein bS21 from Dechloromonas aromatica (strain RCB).